Reading from the N-terminus, the 710-residue chain is Putative transmembrane protein ORF710 (710 aa).

An N-terminal signal peptide occupies residues 1–33 (MKLDRKKKRLLLKTIFSIVILILPLTFLHPTNS). 3 helical membrane passes run 41-61 (VPIQ…TAPL), 76-95 (YGTL…VVWY), and 689-709 (VAIV…IFAI).

It localises to the host membrane. This Acidianus convivator (ATV) protein is Putative transmembrane protein ORF710.